Reading from the N-terminus, the 436-residue chain is 4-hydroxyphenylpyruvate dioxygenase (436 aa).

VOC domains are found at residues 38-194 (RFHH…GFEV) and 210-370 (RLDH…IFTK). Fe cation-binding residues include His213, His295, and Glu381.

It belongs to the 4HPPD family. Fe cation is required as a cofactor.

It is found in the cytoplasm. It catalyses the reaction 3-(4-hydroxyphenyl)pyruvate + O2 = homogentisate + CO2. It functions in the pathway amino-acid degradation; L-phenylalanine degradation; acetoacetate and fumarate from L-phenylalanine: step 3/6. Its pathway is cofactor biosynthesis; prenylquinone biosynthesis. The chain is 4-hydroxyphenylpyruvate dioxygenase from Plectranthus scutellarioides (Coleus).